A 652-amino-acid chain; its full sequence is Acetyl-coenzyme A synthetase (652 aa).

CoA is bound by residues 191–194 (RAGR), Thr-311, and Asn-335. Residues 387-389 (GEP), 411-416 (DTWWQT), Asp-500, and Arg-515 each bind ATP. Residue Ser-523 coordinates CoA. Arg-526 is an ATP binding site. Residues Val-537, His-539, and Ile-542 each coordinate Mg(2+). Residue Arg-584 participates in CoA binding. An N6-acetyllysine modification is found at Lys-609.

This sequence belongs to the ATP-dependent AMP-binding enzyme family. The cofactor is Mg(2+). Post-translationally, acetylated. Deacetylation by the SIR2-homolog deacetylase activates the enzyme.

The catalysed reaction is acetate + ATP + CoA = acetyl-CoA + AMP + diphosphate. Its function is as follows. Catalyzes the conversion of acetate into acetyl-CoA (AcCoA), an essential intermediate at the junction of anabolic and catabolic pathways. Acs undergoes a two-step reaction. In the first half reaction, Acs combines acetate with ATP to form acetyl-adenylate (AcAMP) intermediate. In the second half reaction, it can then transfer the acetyl group from AcAMP to the sulfhydryl group of CoA, forming the product AcCoA. Enables the cell to use acetate during aerobic growth to generate energy via the TCA cycle, and biosynthetic compounds via the glyoxylate shunt. Acetylates CheY, the response regulator involved in flagellar movement and chemotaxis. This Escherichia coli O6:H1 (strain CFT073 / ATCC 700928 / UPEC) protein is Acetyl-coenzyme A synthetase.